Reading from the N-terminus, the 312-residue chain is Ribosomal RNA small subunit methyltransferase H (312 aa).

The segment at 1–24 is disordered; that stretch reads MNIMTANQGAVSPSQTESEASPPT. S-adenosyl-L-methionine is bound by residues 55 to 57, D72, Y96, D117, and Q124; that span reads AGH. The interval 288–312 is disordered; sequence EQVDNPRARSAKLRVGERAAAPEGS.

The protein belongs to the methyltransferase superfamily. RsmH family.

The protein localises to the cytoplasm. The enzyme catalyses cytidine(1402) in 16S rRNA + S-adenosyl-L-methionine = N(4)-methylcytidine(1402) in 16S rRNA + S-adenosyl-L-homocysteine + H(+). Functionally, specifically methylates the N4 position of cytidine in position 1402 (C1402) of 16S rRNA. The sequence is that of Ribosomal RNA small subunit methyltransferase H from Deinococcus radiodurans (strain ATCC 13939 / DSM 20539 / JCM 16871 / CCUG 27074 / LMG 4051 / NBRC 15346 / NCIMB 9279 / VKM B-1422 / R1).